Consider the following 296-residue polypeptide: 4-hydroxybenzoate octaprenyltransferase (296 aa).

Helical transmembrane passes span 28–48, 52–72, 102–122, 123–140, 146–166, 169–189, 219–239, 241–261, and 275–295; these read PIGI…AGKG, LNTV…GCVI, ALVL…FTNS, TTIW…CYPF, YYPQ…AFTA, GELP…TVGY, VIIL…GSRF, LGAF…WEFW, and FLHN…DYAL.

Belongs to the UbiA prenyltransferase family. Requires Mg(2+) as cofactor.

It is found in the cell inner membrane. The catalysed reaction is all-trans-octaprenyl diphosphate + 4-hydroxybenzoate = 4-hydroxy-3-(all-trans-octaprenyl)benzoate + diphosphate. The protein operates within cofactor biosynthesis; ubiquinone biosynthesis. Functionally, catalyzes the prenylation of para-hydroxybenzoate (PHB) with an all-trans polyprenyl group. Mediates the second step in the final reaction sequence of ubiquinone-8 (UQ-8) biosynthesis, which is the condensation of the polyisoprenoid side chain with PHB, generating the first membrane-bound Q intermediate 3-octaprenyl-4-hydroxybenzoate. The chain is 4-hydroxybenzoate octaprenyltransferase from Pseudomonas syringae pv. tomato (strain ATCC BAA-871 / DC3000).